The sequence spans 875 residues: Kelch-like protein 29 (875 aa).

The span at 113–126 (IRWGQTPVNQSTPW) shows a compositional bias: polar residues. Disordered stretches follow at residues 113 to 145 (IRWG…PGTG) and 240 to 291 (GVGQ…DSAH). Residues 131–140 (PPSKQMRESD) are compositionally biased toward basic and acidic residues. Positions 270–280 (PSAALPSSVPA) are enriched in low complexity. One can recognise a BTB domain in the interval 329 to 401 (TDLKIVVEGR…VYTGSLVIDS (73 aa)). Kelch repeat units lie at residues 585-635 (VIVL…VSAG), 637-683 (NIYL…VYDG), 684-730 (KIYT…VCGG), 732-778 (IYVF…TLNG), 779-821 (FVFI…VLDG), and 822-870 (KIYA…VIKK).

This is Kelch-like protein 29 (Klhl29) from Mus musculus (Mouse).